A 246-amino-acid polypeptide reads, in one-letter code: Probable cytokinin riboside 5'-monophosphate phosphoribohydrolase LOGL5 (246 aa).

Residues 1–10 (MMMENSREQQ) show a composition bias toward basic and acidic residues. Positions 1 to 28 (MMMENSREQQPESSPANNNSKKKKKKKT) are disordered. Residues E103, 121–122 (RK), 138–144 (GYGTLEE), and T150 contribute to the substrate site.

The protein belongs to the LOG family. Expressed in roots and leaves.

It catalyses the reaction N(6)-(dimethylallyl)adenosine 5'-phosphate + H2O = N(6)-dimethylallyladenine + D-ribose 5-phosphate. The catalysed reaction is 9-ribosyl-trans-zeatin 5'-phosphate + H2O = trans-zeatin + D-ribose 5-phosphate. Cytokinin-activating enzyme working in the direct activation pathway. Phosphoribohydrolase that converts inactive cytokinin nucleotides to the biologically active free-base forms. This chain is Probable cytokinin riboside 5'-monophosphate phosphoribohydrolase LOGL5 (LOGL5), found in Oryza sativa subsp. japonica (Rice).